A 137-amino-acid chain; its full sequence is Ubiquitin-conjugating enzyme variant MMS2 (137 aa).

Positions 5–137 (PRNFRLLEEL…LRQPKEGETF (133 aa)) constitute a UBC core domain. S71 is subject to Phosphoserine.

This sequence belongs to the ubiquitin-conjugating enzyme family. As to quaternary structure, heterodimer with UBC13.

In terms of biological role, has a role in the DNA error-free postreplication repair (PRR) pathway. Lacks catalytic activity by itself. The UBC13/MMS2 heterodimer catalyzes the synthesis of non-canonical poly-ubiquitin chains that are linked through 'Lys-63'. The chain is Ubiquitin-conjugating enzyme variant MMS2 (MMS2) from Saccharomyces cerevisiae (strain ATCC 204508 / S288c) (Baker's yeast).